Here is a 198-residue protein sequence, read N- to C-terminus: Pyridoxal 5'-phosphate synthase subunit PdxT (198 aa).

52–54 provides a ligand contact to L-glutamine; that stretch reads GES. Cys-84 functions as the Nucleophile in the catalytic mechanism. Residues Arg-115 and 143 to 144 each bind L-glutamine; that span reads IR. Catalysis depends on charge relay system residues His-179 and Glu-181.

This sequence belongs to the glutaminase PdxT/SNO family. As to quaternary structure, in the presence of PdxS, forms a dodecamer of heterodimers. Only shows activity in the heterodimer.

The catalysed reaction is aldehydo-D-ribose 5-phosphate + D-glyceraldehyde 3-phosphate + L-glutamine = pyridoxal 5'-phosphate + L-glutamate + phosphate + 3 H2O + H(+). The enzyme catalyses L-glutamine + H2O = L-glutamate + NH4(+). It functions in the pathway cofactor biosynthesis; pyridoxal 5'-phosphate biosynthesis. Catalyzes the hydrolysis of glutamine to glutamate and ammonia as part of the biosynthesis of pyridoxal 5'-phosphate. The resulting ammonia molecule is channeled to the active site of PdxS. The chain is Pyridoxal 5'-phosphate synthase subunit PdxT from Methanococcoides burtonii (strain DSM 6242 / NBRC 107633 / OCM 468 / ACE-M).